A 122-amino-acid chain; its full sequence is Large ribosomal subunit protein bL12 (122 aa).

The protein belongs to the bacterial ribosomal protein bL12 family. Homodimer. Part of the ribosomal stalk of the 50S ribosomal subunit. Forms a multimeric L10(L12)X complex, where L10 forms an elongated spine to which 2 to 4 L12 dimers bind in a sequential fashion. Binds GTP-bound translation factors.

Forms part of the ribosomal stalk which helps the ribosome interact with GTP-bound translation factors. Is thus essential for accurate translation. In Aliivibrio fischeri (strain ATCC 700601 / ES114) (Vibrio fischeri), this protein is Large ribosomal subunit protein bL12.